Reading from the N-terminus, the 61-residue chain is Alpha-conotoxine-like Am1.3 (61 aa).

A signal peptide spans methionine 1–serine 21. A propeptide spanning residues phenylalanine 22–lysine 44 is cleaved from the precursor. Cysteine 60 carries the cysteine amide modification.

Belongs to the conotoxin A superfamily. Is not hydroxylated. Post-translationally, contains 2 disulfide bonds. Expressed by the venom duct.

Its subcellular location is the secreted. Its function is as follows. Alpha-conotoxins act on postsynaptic membranes, they bind to the nicotinic acetylcholine receptors (nAChR) and thus inhibit them. The sequence is that of Alpha-conotoxine-like Am1.3 from Conus amadis (Amadis cone).